The primary structure comprises 146 residues: MAIYGIGTDIAQVSRVAAVLERTGGRFAEKVLGPDELRVFHARRARSEARGIAFLATRFSAKEAFSKAIGLGMHWPMTWRALQTLNHPSGEPYVVASGELADWLAARGITARVTVSDERDYAVSFVVAETDAAPAPAAAPVSRTSS.

Positions 9 and 63 each coordinate Mg(2+).

It belongs to the P-Pant transferase superfamily. AcpS family. Requires Mg(2+) as cofactor.

The protein resides in the cytoplasm. It carries out the reaction apo-[ACP] + CoA = holo-[ACP] + adenosine 3',5'-bisphosphate + H(+). Transfers the 4'-phosphopantetheine moiety from coenzyme A to a Ser of acyl-carrier-protein. This Burkholderia orbicola (strain MC0-3) protein is Holo-[acyl-carrier-protein] synthase.